A 217-amino-acid chain; its full sequence is Protein-L-isoaspartate O-methyltransferase (217 aa).

S59 is an active-site residue.

It belongs to the methyltransferase superfamily. L-isoaspartyl/D-aspartyl protein methyltransferase family.

The protein localises to the cytoplasm. It carries out the reaction [protein]-L-isoaspartate + S-adenosyl-L-methionine = [protein]-L-isoaspartate alpha-methyl ester + S-adenosyl-L-homocysteine. In terms of biological role, catalyzes the methyl esterification of L-isoaspartyl residues in peptides and proteins that result from spontaneous decomposition of normal L-aspartyl and L-asparaginyl residues. It plays a role in the repair and/or degradation of damaged proteins. The polypeptide is Protein-L-isoaspartate O-methyltransferase (pcm) (Methanothermobacter thermautotrophicus (strain ATCC 29096 / DSM 1053 / JCM 10044 / NBRC 100330 / Delta H) (Methanobacterium thermoautotrophicum)).